Reading from the N-terminus, the 248-residue chain is MSTVDKEELVQKAKLAEQSERYDDMAQAMKSVTETGVELSNEERNLLSVAYKNVVGARRSSWRVISSIEQKTESSARKQQLAREYRERVEKELREICYEVLGLLDKFLIPKASNPESKVFYLKMKGDYYRYLAEVATGETRNTVVDDSQAAYQDAFEISKGKMQPTHPIRLGLALNFSVFYYEILNSPDKACQLAKQAFDDAIAELDTLNEDSYKDSTLIMQLLRDNLTLWTSDTQGDGDEPQEGGDN.

Belongs to the 14-3-3 family. As to quaternary structure, homodimer.

Its subcellular location is the cytoplasm. In terms of biological role, adapter protein implicated in the regulation of a large spectrum of both general and specialized signaling pathways. Binds to a large number of partners, usually by recognition of a phosphoserine or phosphothreonine motif. Binding generally results in the modulation of the activity of the binding partner. The polypeptide is 14-3-3 protein zeta (14-3-3zeta) (Aedes aegypti (Yellowfever mosquito)).